We begin with the raw amino-acid sequence, 279 residues long: Tryptophan 2,3-dioxygenase (279 aa).

Substrate contacts are provided by residues 48 to 52 (FIVIH), Tyr110, and Arg114. His237 is a heme binding site. Thr251 is a substrate binding site.

This sequence belongs to the tryptophan 2,3-dioxygenase family. In terms of assembly, homotetramer. Heme serves as cofactor.

The catalysed reaction is L-tryptophan + O2 = N-formyl-L-kynurenine. Its pathway is amino-acid degradation; L-tryptophan degradation via kynurenine pathway; L-kynurenine from L-tryptophan: step 1/2. Functionally, heme-dependent dioxygenase that catalyzes the oxidative cleavage of the L-tryptophan (L-Trp) pyrrole ring and converts L-tryptophan to N-formyl-L-kynurenine. Catalyzes the oxidative cleavage of the indole moiety. In Exiguobacterium sibiricum (strain DSM 17290 / CCUG 55495 / CIP 109462 / JCM 13490 / 255-15), this protein is Tryptophan 2,3-dioxygenase.